The chain runs to 294 residues: Halotolerance protein HAL1 (294 aa).

A disordered region spans residues 115-153 (LKRGTKEQEDINSSTSKKSAVINNFSGEKTPNPRPQSSN). The segment covering 125–153 (INSSTSKKSAVINNFSGEKTPNPRPQSSN) has biased composition (polar residues). S266 is modified (phosphoserine).

It is found in the cytoplasm. Functionally, involved in salt tolerance. The polypeptide is Halotolerance protein HAL1 (HAL1) (Saccharomyces cerevisiae (strain ATCC 204508 / S288c) (Baker's yeast)).